Consider the following 329-residue polypeptide: Beta-ketoacyl-[acyl-carrier-protein] synthase III (329 aa).

Catalysis depends on residues cysteine 112 and histidine 253. The tract at residues 254-258 (QANQR) is ACP-binding. Residue asparagine 283 is part of the active site.

It belongs to the thiolase-like superfamily. FabH family. In terms of assembly, homodimer.

It is found in the cytoplasm. It carries out the reaction malonyl-[ACP] + acetyl-CoA + H(+) = 3-oxobutanoyl-[ACP] + CO2 + CoA. Its pathway is lipid metabolism; fatty acid biosynthesis. Catalyzes the condensation reaction of fatty acid synthesis by the addition to an acyl acceptor of two carbons from malonyl-ACP. Catalyzes the first condensation reaction which initiates fatty acid synthesis and may therefore play a role in governing the total rate of fatty acid production. Possesses both acetoacetyl-ACP synthase and acetyl transacylase activities. Its substrate specificity determines the biosynthesis of branched-chain and/or straight-chain of fatty acids. The polypeptide is Beta-ketoacyl-[acyl-carrier-protein] synthase III (Gloeobacter violaceus (strain ATCC 29082 / PCC 7421)).